A 50-amino-acid chain; its full sequence is uncharacterized protein (50 aa).

This is an uncharacterized protein from Ornithodoros (relapsing fever ticks).